A 390-amino-acid polypeptide reads, in one-letter code: MYELSTLYAAFEQYFGHPPTRIARAPGRVNLIGEHTDYNDGFVFPMALDRATYVAARPRNDQIVRVFSIKFRDEDQFDLQQIVRDERRQWVNYIRGVAKGLLARDLPLRGADLMIDSDVPAGSGLSSSAALEVAVGYTFQLLNNINLLGEELALVAQGAEHTFVGVKCGIMDQLIAALGEAGHALLIDCRDLSYRPVPIPAEARVVVCDSGVRHRLAGSEYNQRRAGCEEAVRLLKPALGKIQALRDVRSSDLAMYGHLLPPDLLPLARHVVSENERTLAAAEALAAGDLVKMGQLMVASHVSLRDDYRVSVRELDTLVDLALAAPGCFGSRMTGGGFGGSTVSLVAADHVDAFVAAMVDGYAIRTGRKLQPLVCTAGAGVSCVYASEEE.

Substrate is bound at residue 34–37; sequence EHTD. ATP contacts are provided by residues Ser68 and 122–128; that span reads GSGLSSS. Mg(2+)-binding residues include Ser128 and Glu160. The active-site Proton acceptor is the Asp172. Residue Tyr221 coordinates substrate.

This sequence belongs to the GHMP kinase family. GalK subfamily.

The protein localises to the cytoplasm. The enzyme catalyses alpha-D-galactose + ATP = alpha-D-galactose 1-phosphate + ADP + H(+). It functions in the pathway carbohydrate metabolism; galactose metabolism. Functionally, catalyzes the transfer of the gamma-phosphate of ATP to D-galactose to form alpha-D-galactose-1-phosphate (Gal-1-P). The chain is Galactokinase from Chloroflexus aurantiacus (strain ATCC 29366 / DSM 635 / J-10-fl).